A 36-amino-acid polypeptide reads, in one-letter code: Photosystem I reaction center subunit VIII (36 aa).

Residues 6–28 (FPSVLVPLVGLVFPAMAMASLSL) traverse the membrane as a helical segment.

The protein belongs to the PsaI family.

Its subcellular location is the plastid. It is found in the chloroplast thylakoid membrane. In terms of biological role, may help in the organization of the PsaL subunit. This Panax ginseng (Korean ginseng) protein is Photosystem I reaction center subunit VIII.